Consider the following 369-residue polypeptide: MQEKGLAGKMMDIVPGLLVMVGTLYVLRTYVEPWMKDAVVFGRKGWLVQVLSLNYILLSILTGMFYRNILFGGKIPGWAEEGFRTTRLFIKTGVIMLGSLYTFDKLLKVGGVAITLIVAFVFGTAIFIMWLGSRLGADRSVTATMAAACGVCGVSAAVATAPGVRAKPVDLALSIATILGFGIMTMFVSPFIGKALQLSDYQFGAWVGTGILNSGQVLATCLAFNPVFAPGTAVAYGEIWNVVRVICIPFVVFFITAWYWKGEADAEHTSLGSILASKFPIFVLGFVGMTALSSLHMLGAEGSETLHLMRDVMAWIFGVGLVGLGAYIDVREIKAAGGVPLRIGLIAGMVKYILALIIILAFIPKEGAF.

The next 9 membrane-spanning stretches (helical) occupy residues 13 to 31 (IVPGLLVMVGTLYVLRTYV), 46 to 65 (WLVQVLSLNYILLSILTGMF), 110 to 132 (GGVAITLIVAFVFGTAIFIMWLG), 142 to 164 (TATMAAACGVCGVSAAVATAPGV), 171 to 193 (LALSIATILGFGIMTMFVSPFIG), 240 to 262 (WNVVRVICIPFVVFFITAWYWKG), 269 to 291 (TSLGSILASKFPIFVLGFVGMTA), 306 to 328 (LHLMRDVMAWIFGVGLVGLGAYI), and 341 to 363 (LRIGLIAGMVKYILALIIILAFI).

This sequence belongs to the UPF0324 family.

The protein localises to the cell membrane. In Nitratidesulfovibrio vulgaris (strain ATCC 29579 / DSM 644 / CCUG 34227 / NCIMB 8303 / VKM B-1760 / Hildenborough) (Desulfovibrio vulgaris), this protein is UPF0324 membrane protein DVU_0543.